The following is a 315-amino-acid chain: tRNA dimethylallyltransferase (315 aa).

ATP is bound at residue 10 to 17 (GPTATGKS). Residue 12–17 (TATGKS) participates in substrate binding. Positions 35 to 38 (DSMQ) are interaction with substrate tRNA.

It belongs to the IPP transferase family. As to quaternary structure, monomer. It depends on Mg(2+) as a cofactor.

It carries out the reaction adenosine(37) in tRNA + dimethylallyl diphosphate = N(6)-dimethylallyladenosine(37) in tRNA + diphosphate. In terms of biological role, catalyzes the transfer of a dimethylallyl group onto the adenine at position 37 in tRNAs that read codons beginning with uridine, leading to the formation of N6-(dimethylallyl)adenosine (i(6)A). This is tRNA dimethylallyltransferase from Caldanaerobacter subterraneus subsp. tengcongensis (strain DSM 15242 / JCM 11007 / NBRC 100824 / MB4) (Thermoanaerobacter tengcongensis).